A 459-amino-acid polypeptide reads, in one-letter code: cAMP-dependent protein kinase regulatory subunit (459 aa).

Positions 30–219 (QFCANYFNTK…TLANNLKNNF (190 aa)) are dimerization and phosphorylation. Disordered regions lie at residues 78-109 (VNDR…DTKT) and 125-168 (FDVK…PSSK). Basic and acidic residues predominate over residues 95-109 (HSNHDEDPHAKDTKT). Low complexity predominate over residues 146–168 (KPSSSSQPNQQSASASSKTPSSK). Ser180 is subject to Phosphoserine. 3',5'-cyclic AMP contacts are provided by residues 220–335 (LFKQ…FLKD), Glu285, Arg294, 338–454 (VLKS…KSQD), Glu404, and Arg413.

The protein belongs to the cAMP-dependent kinase regulatory chain family. Tetramer, composed of 2 regulatory (R) and 2 catalytic (C) subunits. In the presence of cAMP it dissociates into 2 active monomeric C subunits and an R dimer.

This Candida albicans (strain SC5314 / ATCC MYA-2876) (Yeast) protein is cAMP-dependent protein kinase regulatory subunit (BCY1).